The chain runs to 565 residues: Polycomb protein EED (565 aa).

WD repeat units follow at residues 89 to 133 (DDGN…LYRT), 136 to 176 (GHGG…EKQP), 185 to 224 (GHSY…NEHM), and 240 to 278 (IHNN…SDDP). The tract at residues 417–488 (VKKAPGAAGS…SASPDPDSPF (72 aa)) is disordered. The segment covering 429–450 (GTAANGGHNNNNNNNNNNNNNN) has biased composition (low complexity). Polar residues predominate over residues 451–468 (HETGSQRSFSATNNLSNS). The WD 5 repeat unit spans residues 519-559 (IDGAFVGRQVGWSPEGEWCVVVGNGNRALIYQRWGKERGLG).

This sequence belongs to the WD repeat ESC family. In terms of assembly, component of the polycomb repressive complex 2 (PRC2) that consists of four core subunits icluding EZH2, EED, SUZ12, and RBBP4, among which EZH2 is the catalytic subunit and which minimally requires EED and SUZ12 for catalysis.

Its subcellular location is the nucleus. In terms of biological role, component of the of the Polycomb Repressive Complex 2 (PRC2), a histone H3 lysine methyltransferase responsible for generating mono-, di-, and tri-methylation on Lys27 (H3K27me1, H3K27me2 and H3K27me3). The tri-methylated form is known to be critical in gene repression, and its proper placement is essential in defining repression patterns during development. EED is not a catalytic subunit but is required for the complex regulation of histone H3 lysine methylation by EZH2. This Chaetomium thermophilum (strain DSM 1495 / CBS 144.50 / IMI 039719) (Thermochaetoides thermophila) protein is Polycomb protein EED.